A 147-amino-acid polypeptide reads, in one-letter code: uncharacterized protein (147 aa).

This is an uncharacterized protein from Mycolicibacterium smegmatis (Mycobacterium smegmatis).